The sequence spans 420 residues: UDP-glucuronic acid decarboxylase 1 (420 aa).

Met-1 carries the post-translational modification N-acetylmethionine. The Cytoplasmic portion of the chain corresponds to 1–19 (MVSKALLRLVSAVNRRRMK). Residues 20 to 40 (LLLGIALLAYVASVWGNFVNM) traverse the membrane as a helical; Signal-anchor for type II membrane protein segment. The Lumenal portion of the chain corresponds to 41–420 (RSIQENGELK…RIKKGRTRHN (380 aa)). At Thr-94 the chain carries Phosphothreonine. Positions 98, 99, 100, 119, 120, 122, 123, 124, 144, and 145 each coordinate NAD(+). UDP-alpha-D-glucuronate contacts are provided by Leu-149 and Tyr-150. Positions 159 and 161 each coordinate NAD(+). Residue Lys-177 coordinates UDP-alpha-D-glucuronate. Residue Thr-178 coordinates NAD(+). 4 residues coordinate UDP-alpha-D-glucuronate: Asn-185, Gly-188, Lys-191, and Arg-192. Positions 200, 231, and 235 each coordinate NAD(+). Catalysis depends on Tyr-231, which acts as the Proton acceptor. 3 residues coordinate UDP-alpha-D-glucuronate: Tyr-245, Gln-248, and Glu-249. Positions 261, 267, and 272 each coordinate NAD(+). N-linked (GlcNAc...) asparagine glycosylation is present at Asn-316.

This sequence belongs to the NAD(P)-dependent epimerase/dehydratase family. UDP-glucuronic acid decarboxylase subfamily. Homodimer and homotetramer. Interacts with AKT1. The cofactor is NAD(+).

It is found in the golgi apparatus. It localises to the golgi stack membrane. It carries out the reaction UDP-alpha-D-glucuronate + H(+) = UDP-alpha-D-xylose + CO2. The protein operates within nucleotide-sugar biosynthesis; UDP-alpha-D-xylose biosynthesis; UDP-alpha-D-xylose from UDP-alpha-D-glucuronate: step 1/1. In terms of biological role, catalyzes the NAD-dependent decarboxylation of UDP-glucuronic acid to UDP-xylose. Necessary for the biosynthesis of the core tetrasaccharide in glycosaminoglycan biosynthesis. The chain is UDP-glucuronic acid decarboxylase 1 (UXS1) from Pongo abelii (Sumatran orangutan).